The chain runs to 317 residues: Porphobilinogen deaminase (317 aa).

The residue at position 245 (cysteine 245) is an S-(dipyrrolylmethanemethyl)cysteine.

This sequence belongs to the HMBS family. As to quaternary structure, monomer. Dipyrromethane serves as cofactor.

It catalyses the reaction 4 porphobilinogen + H2O = hydroxymethylbilane + 4 NH4(+). It functions in the pathway porphyrin-containing compound metabolism; protoporphyrin-IX biosynthesis; coproporphyrinogen-III from 5-aminolevulinate: step 2/4. The protein operates within porphyrin-containing compound metabolism; chlorophyll biosynthesis. In terms of biological role, tetrapolymerization of the monopyrrole PBG into the hydroxymethylbilane pre-uroporphyrinogen in several discrete steps. This chain is Porphobilinogen deaminase, found in Synechococcus sp. (strain CC9902).